Here is a 62-residue protein sequence, read N- to C-terminus: Large ribosomal subunit protein eL24 (62 aa).

The Zn(2+) site is built by C6, C9, C32, and C36. The C4-type zinc-finger motif lies at 6 to 36 (CYFCGQMLEPGTGKLYIKKDGSTYFMCSSKC).

Belongs to the eukaryotic ribosomal protein eL24 family. In terms of assembly, part of the 50S ribosomal subunit. Forms a cluster with proteins L3 and L14. It depends on Zn(2+) as a cofactor.

Functionally, binds to the 23S rRNA. The sequence is that of Large ribosomal subunit protein eL24 from Methanosarcina mazei (strain ATCC BAA-159 / DSM 3647 / Goe1 / Go1 / JCM 11833 / OCM 88) (Methanosarcina frisia).